The chain runs to 494 residues: Protein nucleotidyltransferase YdiU (494 aa).

Glycine 101, glycine 103, arginine 104, lysine 123, aspartate 135, glycine 136, arginine 186, and arginine 193 together coordinate ATP. Aspartate 262 (proton acceptor) is an active-site residue. The Mg(2+) site is built by asparagine 263 and aspartate 272. Aspartate 272 contributes to the ATP binding site.

The protein belongs to the SELO family. It depends on Mg(2+) as a cofactor. Mn(2+) is required as a cofactor.

The enzyme catalyses L-seryl-[protein] + ATP = 3-O-(5'-adenylyl)-L-seryl-[protein] + diphosphate. It catalyses the reaction L-threonyl-[protein] + ATP = 3-O-(5'-adenylyl)-L-threonyl-[protein] + diphosphate. The catalysed reaction is L-tyrosyl-[protein] + ATP = O-(5'-adenylyl)-L-tyrosyl-[protein] + diphosphate. It carries out the reaction L-histidyl-[protein] + UTP = N(tele)-(5'-uridylyl)-L-histidyl-[protein] + diphosphate. The enzyme catalyses L-seryl-[protein] + UTP = O-(5'-uridylyl)-L-seryl-[protein] + diphosphate. It catalyses the reaction L-tyrosyl-[protein] + UTP = O-(5'-uridylyl)-L-tyrosyl-[protein] + diphosphate. In terms of biological role, nucleotidyltransferase involved in the post-translational modification of proteins. It can catalyze the addition of adenosine monophosphate (AMP) or uridine monophosphate (UMP) to a protein, resulting in modifications known as AMPylation and UMPylation. In Chromohalobacter salexigens (strain ATCC BAA-138 / DSM 3043 / CIP 106854 / NCIMB 13768 / 1H11), this protein is Protein nucleotidyltransferase YdiU.